We begin with the raw amino-acid sequence, 207 residues long: MWAFGGRAAVGLLPRTASRASAWVGNPRWREPIVTCGRRGLHVTVNAGATRHAHLNLHYLQILNIKKQSVCVVHLRNLGTLDNPSSLDETAYERLAEETLDSLAEFFEDLADKPYTLEDYDVSFGDGVLTIKLGGDLGTYVINKQTPNKQIWLSSPSSGPKRYDWTGKNWVYSHDGVSLHELLARELTKALNTKLDLSSLAYSGKGT.

The N-terminal 40 residues, Met-1 to Gly-40, are a transit peptide targeting the mitochondrion.

It belongs to the frataxin family. In terms of assembly, component of the mitochondrial core iron-sulfur cluster (ISC) complex composed of NFS1, LYRM4, NDUFAB1, ISCU, FXN, and FDX2; this complex is a heterohexamer containing two copies of each monomer. Homodimer. Monomer (probable predominant form). Oligomer. Monomers and polymeric aggregates of &gt;1 MDa have been isolated from mitochondria. A small fraction of heterologous overexpressed recombinant frataxin forms high-molecular weight aggregates that incorporate iron. Interacts with LYRM4. Interacts (via ferrous form) with ISCU; the interaction is possible when both are bound to the dimeric form of the cysteine desulfurase complex (NFS1:LYRM4) and the interaction enhances FXN interaction to the dimeric form of the cysteine desulfurase complex (NFS1:LYRM4). Interacts with FECH; one iron-bound FXN monomer seems to interact with a FECH homodimer. Interacts with SDHA and SDHB. Interacts with ACO2; the interaction is dependent on citrate. Interacts with HSPA9. Component of a complex composed of FXN, NFS1, LYRM4 and ISCU. Interacts with ACO1. Interacts with ISCU (cytoplasmic form). Processed in two steps by mitochondrial processing peptidase (MPP). MPP first cleaves the precursor to intermediate form and subsequently converts the intermediate to yield frataxin mature form (frataxin(81-210)) which is the predominant form. The additional forms, frataxin(56-210) and frataxin(78-210), seem to be produced when the normal maturation process is impaired; their physiological relevance is unsure. As to expression, heart, liver, skeletal muscle, kidney, spleen and thymus. Weakly expressed in the brain and lung.

It is found in the mitochondrion. The protein resides in the cytoplasm. Its subcellular location is the cytosol. The catalysed reaction is 4 Fe(2+) + O2 + 4 H(+) = 4 Fe(3+) + 2 H2O. Its function is as follows. Functions as an activator of persulfide transfer to the scaffoding protein ISCU as component of the core iron-sulfur cluster (ISC) assembly complex and participates to the [2Fe-2S] cluster assembly. Accelerates sulfur transfer from NFS1 persulfide intermediate to ISCU and to small thiols such as L-cysteine and glutathione leading to persulfuration of these thiols and ultimately sulfide release. Binds ferrous ion and is released from FXN upon the addition of both L-cysteine and reduced FDX2 during [2Fe-2S] cluster assembly. The core iron-sulfur cluster (ISC) assembly complex is involved in the de novo synthesis of a [2Fe-2S] cluster, the first step of the mitochondrial iron-sulfur protein biogenesis. This process is initiated by the cysteine desulfurase complex (NFS1:LYRM4:NDUFAB1) that produces persulfide which is delivered on the scaffold protein ISCU in a FXN-dependent manner. Then this complex is stabilized by FDX2 which provides reducing equivalents to accomplish the [2Fe-2S] cluster assembly. Finally, the [2Fe-2S] cluster is transferred from ISCU to chaperone proteins, including HSCB, HSPA9 and GLRX5. May play a role in the protection against iron-catalyzed oxidative stress through its ability to catalyze the oxidation of Fe(2+) to Fe(3+); the oligomeric form but not the monomeric form has in vitro ferroxidase activity. May be able to store large amounts of iron in the form of a ferrihydrite mineral by oligomerization; however, the physiological relevance is unsure as reports are conflicting and the function has only been shown using heterologous overexpression systems. May function as an iron chaperone protein that protects the aconitase [4Fe-4S]2+ cluster from disassembly and promotes enzyme reactivation. May play a role as a high affinity iron binding partner for FECH that is capable of both delivering iron to ferrochelatase and mediating the terminal step in mitochondrial heme biosynthesis. In terms of biological role, modulates the RNA-binding activity of ACO1. May be involved in the cytoplasmic iron-sulfur protein biogenesis. May contribute to oxidative stress resistance and overall cell survival. The polypeptide is Frataxin, mitochondrial (Mus musculus (Mouse)).